We begin with the raw amino-acid sequence, 878 residues long: AP-5 complex subunit beta-1 (878 aa).

The segment at 234–260 (RLQPQAPSWPAAEEGEGERSLTAREHS) is disordered. A compositionally biased stretch (basic and acidic residues) spans 250–260 (GERSLTAREHS).

In terms of assembly, probably part of the adaptor protein complex 5 (AP-5), a tetramer composed of AP5B1, AP5M1, AP5S1 and AP5Z1. Interacts with ZFYVE26 and SPG11.

Functionally, as part of AP-5, a probable fifth adaptor protein complex it may be involved in endosomal transport. The chain is AP-5 complex subunit beta-1 (AP5B1) from Homo sapiens (Human).